We begin with the raw amino-acid sequence, 109 residues long: MKFVLLFGVLLVTLFSYSSAEMLDDFDQADEDELLSLIEKEEARAKECTPRFYDCSHDRHSCCRSELFKDVCTCFYPEGGDNKEVCTCQQPKHLKYMEKATDKIKNLFG.

An N-terminal signal peptide occupies residues 1–20 (MKFVLLFGVLLVTLFSYSSA). A propeptide spanning residues 21–44 (EMLDDFDQADEDELLSLIEKEEAR) is cleaved from the precursor. Disulfide bonds link cysteine 48–cysteine 63, cysteine 55–cysteine 72, cysteine 62–cysteine 88, and cysteine 74–cysteine 86.

It belongs to the neurotoxin 19 (CSTX) family. 01 subfamily. In terms of tissue distribution, expressed by the venom gland.

The protein localises to the secreted. In Lycosa singoriensis (Wolf spider), this protein is U3-lycotoxin-Ls1x.